We begin with the raw amino-acid sequence, 269 residues long: Formamidopyrimidine-DNA glycosylase (269 aa).

P2 serves as the catalytic Schiff-base intermediate with DNA. E3 acts as the Proton donor in catalysis. The active-site Proton donor; for beta-elimination activity is the K57. Positions 90, 109, and 150 each coordinate DNA. Residues Q235–K269 form an FPG-type zinc finger. R259 serves as the catalytic Proton donor; for delta-elimination activity.

Belongs to the FPG family. As to quaternary structure, monomer. Requires Zn(2+) as cofactor.

It carries out the reaction Hydrolysis of DNA containing ring-opened 7-methylguanine residues, releasing 2,6-diamino-4-hydroxy-5-(N-methyl)formamidopyrimidine.. The enzyme catalyses 2'-deoxyribonucleotide-(2'-deoxyribose 5'-phosphate)-2'-deoxyribonucleotide-DNA = a 3'-end 2'-deoxyribonucleotide-(2,3-dehydro-2,3-deoxyribose 5'-phosphate)-DNA + a 5'-end 5'-phospho-2'-deoxyribonucleoside-DNA + H(+). Its function is as follows. Involved in base excision repair of DNA damaged by oxidation or by mutagenic agents. Acts as a DNA glycosylase that recognizes and removes damaged bases. Has a preference for oxidized purines, such as 7,8-dihydro-8-oxoguanine (8-oxoG). Has AP (apurinic/apyrimidinic) lyase activity and introduces nicks in the DNA strand. Cleaves the DNA backbone by beta-delta elimination to generate a single-strand break at the site of the removed base with both 3'- and 5'-phosphates. The protein is Formamidopyrimidine-DNA glycosylase of Photobacterium profundum (strain SS9).